The chain runs to 448 residues: Tumor necrosis factor receptor superfamily member EDAR (448 aa).

An N-terminal signal peptide occupies residues 1–26 (MAHVGDCTQTPWLPVLVVSLMCSARA). At 27-187 (EYSNCGENEY…LSGQGHLATA (161 aa)) the chain is on the extracellular side. TNFR-Cys repeat units lie at residues 30–71 (NCGE…DYGC), 73–113 (PCPA…DAEC), and 115–148 (PCLPGYYMLENRPRNIYGMVCYSCLLAPPNTKEC). 6 cysteine pairs are disulfide-bonded: cysteine 31-cysteine 44, cysteine 47-cysteine 60, cysteine 50-cysteine 71, cysteine 74-cysteine 87, cysteine 93-cysteine 113, and cysteine 135-cysteine 148. Asparagine 38 is a glycosylation site (N-linked (GlcNAc...) asparagine). The helical transmembrane segment at 188–208 (LIIAMSTIFIMAIAIVLIIMF) threads the bilayer. Topologically, residues 209–448 (YILKTKPSAP…PPASQPHAAS (240 aa)) are cytoplasmic. Positions 220 to 297 (CCTSHPGKSV…EEPAPDKQGS (78 aa)) are disordered. The span at 233–243 (VSKDEEKKEAP) shows a compositional bias: basic and acidic residues. Positions 271–283 (DASSENEQLLSRS) are enriched in polar residues. One can recognise a Death domain in the interval 358–431 (RMLSSTYNSE…DAVESLCADI (74 aa)).

Binds to EDARADD. Associates with TRAF1, TRAF2, TRAF3 and NIK. Detected in fetal kidney, lung, skin and cultured neonatal epidermal keratinocytes. Not detected in lymphoblast and fibroblast cell lines.

Its subcellular location is the membrane. Its function is as follows. Receptor for EDA isoform A1, but not for EDA isoform A2. Mediates the activation of NF-kappa-B and JNK. May promote caspase-independent cell death. The protein is Tumor necrosis factor receptor superfamily member EDAR (EDAR) of Homo sapiens (Human).